Reading from the N-terminus, the 144-residue chain is Fluoride-specific ion channel FluC 1 (144 aa).

The next 4 membrane-spanning stretches (helical) occupy residues 11 to 31 (LIYIIVGIAGILGALSRYYLG), 44 to 64 (LATLLINLIGCFFLAWLTTYI), 74 to 94 (VITGIGTGFIGSFTTFSTFSV), and 107 to 127 (IAFLYVSCSILGGLIMSGLGY). Residues Gly-84 and Thr-87 each coordinate Na(+).

Belongs to the fluoride channel Fluc/FEX (TC 1.A.43) family.

The protein localises to the cell membrane. It carries out the reaction fluoride(in) = fluoride(out). With respect to regulation, na(+) is not transported, but it plays an essential structural role and its presence is essential for fluoride channel function. Fluoride-specific ion channel. Important for reducing fluoride concentration in the cell, thus reducing its toxicity. In Bacillus cereus (strain ATCC 14579 / DSM 31 / CCUG 7414 / JCM 2152 / NBRC 15305 / NCIMB 9373 / NCTC 2599 / NRRL B-3711), this protein is Fluoride-specific ion channel FluC 1.